The following is a 131-amino-acid chain: L-ectoine synthase (131 aa).

Belongs to the ectoine synthase family.

It carries out the reaction (2S)-4-acetamido-2-aminobutanoate = L-ectoine + H2O. Its pathway is amine and polyamine biosynthesis; ectoine biosynthesis; L-ectoine from L-aspartate 4-semialdehyde: step 3/3. Functionally, catalyzes the circularization of gamma-N-acetyl-alpha,gamma-diaminobutyric acid (ADABA) to ectoine (1,4,5,6-tetrahydro-2-methyl-4-pyrimidine carboxylic acid), which is an excellent osmoprotectant. This is L-ectoine synthase from Wolinella succinogenes (strain ATCC 29543 / DSM 1740 / CCUG 13145 / JCM 31913 / LMG 7466 / NCTC 11488 / FDC 602W) (Vibrio succinogenes).